The sequence spans 1029 residues: Multiple C2 domain and transmembrane region protein 6 (1029 aa).

One can recognise a C2 1 domain in the interval 1 to 111 (MNKLVVEIVD…SGVQRYPLDK (111 aa)). The tract at residues 187-224 (TKKKEKESRTFHSIGAHAGGGGGAPPMSQAKQAYPPPP) is disordered. C2 domains are found at residues 277-398 (RSSG…PQWY), 437-562 (RVSH…PRWF), and 605-727 (FSSD…THFY). The Ca(2+) site is built by Asp310, Asp316, Asp363, Asp365, and Asp371. 2 consecutive transmembrane segments (helical) span residues 864 to 884 (LILVCYPELILPTVFLYLFVI) and 976 to 996 (FALIWAVFIYVTPFQVIAIII).

The protein belongs to the MCTP family. The cofactor is Ca(2+). As to expression, expressed in the vascular tissues of cotyledons and rosette leaves. Accumulates in roots caps and shoot apical meristems (SAMs). Observed in flowers.

It is found in the cell membrane. Its subcellular location is the cytoplasm. It localises to the endosome membrane. Its function is as follows. Regulates flowering time under long days. May function as a signaling molecule by regulating the trafficking of other regulators. The polypeptide is Multiple C2 domain and transmembrane region protein 6 (Arabidopsis thaliana (Mouse-ear cress)).